A 331-amino-acid chain; its full sequence is Bifunctional nuclease (331 aa).

The BFN domain maps to 126–261 (CVQNNPRVLR…RIAYNNGLKV (136 aa)). The UVR domain maps to 291–326 (EAQEFDLVRNMLVAAVEERYKDAAQYRDQLFMFRAK).

Belongs to the bifunctional nuclease family.

Its subcellular location is the nucleus. Functionally, bifunctional nuclease with both RNase and DNase activities. Involved in basal defense response. Participates in abscisic acid-derived callose deposition following infection by a necrotrophic pathogen. The chain is Bifunctional nuclease (BBD) from Oryza minuta.